Reading from the N-terminus, the 276-residue chain is Undecaprenyl-diphosphatase (276 aa).

A run of 5 helical transmembrane segments spans residues 84 to 104 (YRLG…GLFF), 115 to 135 (LWVV…AEYV), 188 to 208 (FGFL…LPDA), 222 to 242 (QLLV…AWLL), and 250 to 270 (MYWF…LLAT).

This sequence belongs to the UppP family.

The protein localises to the cell membrane. The enzyme catalyses di-trans,octa-cis-undecaprenyl diphosphate + H2O = di-trans,octa-cis-undecaprenyl phosphate + phosphate + H(+). Its function is as follows. Catalyzes the dephosphorylation of undecaprenyl diphosphate (UPP). Confers resistance to bacitracin. This is Undecaprenyl-diphosphatase from Mycobacterium bovis (strain ATCC BAA-935 / AF2122/97).